Reading from the N-terminus, the 109-residue chain is Parvalbumin, thymic (109 aa).

Ala-2 is subject to N-acetylalanine. 2 EF-hand domains span residues 39–74 (KTPD…FSSS) and 78–109 (LTSA…LVKA). The Ca(2+) site is built by Asp-52, Asp-54, Ser-56, Glu-63, Asp-91, Asp-93, Asp-95, Lys-97, and Glu-102.

Belongs to the parvalbumin family.

In terms of biological role, appears to promote immune maturation in bone marrow cells in culture. Binds two calcium ions. This Gallus gallus (Chicken) protein is Parvalbumin, thymic.